A 478-amino-acid chain; its full sequence is Aspartyl/glutamyl-tRNA(Asn/Gln) amidotransferase subunit B (478 aa).

This sequence belongs to the GatB/GatE family. GatB subfamily. In terms of assembly, heterotrimer of A, B and C subunits.

The catalysed reaction is L-glutamyl-tRNA(Gln) + L-glutamine + ATP + H2O = L-glutaminyl-tRNA(Gln) + L-glutamate + ADP + phosphate + H(+). It carries out the reaction L-aspartyl-tRNA(Asn) + L-glutamine + ATP + H2O = L-asparaginyl-tRNA(Asn) + L-glutamate + ADP + phosphate + 2 H(+). Its function is as follows. Allows the formation of correctly charged Asn-tRNA(Asn) or Gln-tRNA(Gln) through the transamidation of misacylated Asp-tRNA(Asn) or Glu-tRNA(Gln) in organisms which lack either or both of asparaginyl-tRNA or glutaminyl-tRNA synthetases. The reaction takes place in the presence of glutamine and ATP through an activated phospho-Asp-tRNA(Asn) or phospho-Glu-tRNA(Gln). This Lachnoclostridium phytofermentans (strain ATCC 700394 / DSM 18823 / ISDg) (Clostridium phytofermentans) protein is Aspartyl/glutamyl-tRNA(Asn/Gln) amidotransferase subunit B.